We begin with the raw amino-acid sequence, 93 residues long: Small ribosomal subunit protein uS19 (93 aa).

The disordered stretch occupies residues 73–93; that stretch reads EFSPTRTFRGHVKDDRKSKRR. Residues 83-93 are compositionally biased toward basic and acidic residues; sequence HVKDDRKSKRR.

This sequence belongs to the universal ribosomal protein uS19 family.

Protein S19 forms a complex with S13 that binds strongly to the 16S ribosomal RNA. In Streptomyces avermitilis (strain ATCC 31267 / DSM 46492 / JCM 5070 / NBRC 14893 / NCIMB 12804 / NRRL 8165 / MA-4680), this protein is Small ribosomal subunit protein uS19.